The primary structure comprises 220 residues: B-cell antigen receptor complex-associated protein alpha chain (220 aa).

A signal peptide spans Met-1–Ala-28. The Ig-like C2-type domain occupies Leu-29–Leu-117. The Extracellular segment spans residues Leu-29–Arg-137. Cys-50 and Cys-101 are joined by a disulfide. Asn-58 and Asn-68 each carry an N-linked (GlcNAc...) asparagine glycan. Residues Ile-138–Phe-159 traverse the membrane as a helical segment. The Cytoplasmic portion of the chain corresponds to Arg-160–Pro-220. An ITAM domain is found at Asp-171 to Gly-199. A phosphotyrosine; by SRC-type Tyr-kinases mark is found at Tyr-182 and Tyr-193. Arg-198 bears the Asymmetric dimethylarginine; by PRMT1 mark. Tyr-204 carries the post-translational modification Phosphotyrosine; by Tyr-kinases.

Heterodimer of alpha and beta chains; disulfide-linked. Part of the B-cell antigen receptor complex where the alpha/beta chain heterodimer is non-covalently associated with an antigen-specific membrane-bound surface immunoglobulin of two heavy chains and two light chains. Interacts through its phosphorylated ITAM domain with the SH2 domains of SYK which stimulates SYK autophosphorylation and activation. Also interacts, when phosphorylated on Tyr-204, with the SH2 domain of BLNK/SLP65, bringing BLNK into proximity with SYK and allowing SYK to phosphorylate BLNK which is necessary for trafficking of the BCR to late endosomes. Interacts with Src-family tyrosine kinases including FYN and LYN, increasing their activity. Phosphorylated on tyrosine, serine and threonine residues upon B-cell activation. Phosphorylation of tyrosine residues by Src-family kinases, including LYN, is an early and essential feature of the BCR signaling cascade. The phosphorylated tyrosines serve as docking sites for SH2-domain containing kinases, leading to their activation which in turn leads to phosphorylation of downstream targets. Phosphorylation of serine and threonine residues may prevent subsequent tyrosine phosphorylation. In terms of processing, arginine methylation in the ITAM domain may interfere with the binding of SYK. It promotes signals leading to B-cell differentiation. B-cells.

The protein resides in the cell membrane. Its function is as follows. Required in cooperation with CD79B for initiation of the signal transduction cascade activated by binding of antigen to the B-cell antigen receptor complex (BCR) which leads to internalization of the complex, trafficking to late endosomes and antigen presentation. Also required for BCR surface expression and for efficient differentiation of pro- and pre-B-cells. Stimulates SYK autophosphorylation and activation. Binds to BLNK, bringing BLNK into proximity with SYK and allowing SYK to phosphorylate BLNK. Also interacts with and increases activity of some Src-family tyrosine kinases. Represses BCR signaling during development of immature B-cells. In Mus musculus (Mouse), this protein is B-cell antigen receptor complex-associated protein alpha chain (Cd79a).